A 301-amino-acid polypeptide reads, in one-letter code: Protoheme IX farnesyltransferase (301 aa).

9 helical membrane passes run 20–42 (FTEL…GMWL), 55–75 (VDVI…SGAF), 105–125 (ALMV…MTTW), 126–146 (QAGV…SLYA), 150–172 (LVSN…WFAV), 176–198 (FSIV…FYAI), 227–247 (MFFW…LGIV), 249–269 (VVLA…GFKM), and 280–300 (FVYS…ISIF).

The protein belongs to the UbiA prenyltransferase family. Protoheme IX farnesyltransferase subfamily. As to quaternary structure, interacts with CtaA.

It is found in the cell membrane. The enzyme catalyses heme b + (2E,6E)-farnesyl diphosphate + H2O = Fe(II)-heme o + diphosphate. Its pathway is porphyrin-containing compound metabolism; heme O biosynthesis; heme O from protoheme: step 1/1. Functionally, converts heme B (protoheme IX) to heme O by substitution of the vinyl group on carbon 2 of heme B porphyrin ring with a hydroxyethyl farnesyl side group. This Listeria monocytogenes serotype 4b (strain CLIP80459) protein is Protoheme IX farnesyltransferase.